We begin with the raw amino-acid sequence, 270 residues long: Ribonuclease HII (270 aa).

In terms of domain architecture, RNase H type-2 spans 84-270 (RYIAGVDEVG…HRNSFLTKLL (187 aa)). A divalent metal cation-binding residues include Asp-90, Glu-91, and Asp-186.

Belongs to the RNase HII family. Mn(2+) is required as a cofactor. The cofactor is Mg(2+).

Its subcellular location is the cytoplasm. It carries out the reaction Endonucleolytic cleavage to 5'-phosphomonoester.. Functionally, endonuclease that specifically degrades the RNA of RNA-DNA hybrids. The protein is Ribonuclease HII of Clostridium beijerinckii (strain ATCC 51743 / NCIMB 8052) (Clostridium acetobutylicum).